Reading from the N-terminus, the 413-residue chain is Exodeoxyribonuclease 7 large subunit (413 aa).

The protein belongs to the XseA family. Heterooligomer composed of large and small subunits.

It is found in the cytoplasm. The catalysed reaction is Exonucleolytic cleavage in either 5'- to 3'- or 3'- to 5'-direction to yield nucleoside 5'-phosphates.. Functionally, bidirectionally degrades single-stranded DNA into large acid-insoluble oligonucleotides, which are then degraded further into small acid-soluble oligonucleotides. In Corynebacterium efficiens (strain DSM 44549 / YS-314 / AJ 12310 / JCM 11189 / NBRC 100395), this protein is Exodeoxyribonuclease 7 large subunit.